A 227-amino-acid polypeptide reads, in one-letter code: Thymidylate synthase (227 aa).

89–90 contributes to the dUMP binding site; it reads RR. C109 functions as the Nucleophile in the catalytic mechanism. Residues 129–132, N140, and 170–172 contribute to the dUMP site; these read RSND and HVY. A (6R)-5,10-methylene-5,6,7,8-tetrahydrofolate-binding site is contributed by D132.

It belongs to the thymidylate synthase family. Bacterial-type ThyA subfamily. As to quaternary structure, homodimer.

It is found in the cytoplasm. It catalyses the reaction dUMP + (6R)-5,10-methylene-5,6,7,8-tetrahydrofolate = 7,8-dihydrofolate + dTMP. It participates in pyrimidine metabolism; dTTP biosynthesis. Functionally, catalyzes the reductive methylation of 2'-deoxyuridine-5'-monophosphate (dUMP) to 2'-deoxythymidine-5'-monophosphate (dTMP) while utilizing 5,10-methylenetetrahydrofolate (mTHF) as the methyl donor and reductant in the reaction, yielding dihydrofolate (DHF) as a by-product. This enzymatic reaction provides an intracellular de novo source of dTMP, an essential precursor for DNA biosynthesis. This chain is Thymidylate synthase, found in Bacillus atrophaeus.